Consider the following 147-residue polypeptide: 3-hydroxyacyl-[acyl-carrier-protein] dehydratase FabZ (147 aa).

Residue His50 is part of the active site.

The protein belongs to the thioester dehydratase family. FabZ subfamily.

The protein localises to the cytoplasm. The enzyme catalyses a (3R)-hydroxyacyl-[ACP] = a (2E)-enoyl-[ACP] + H2O. Its function is as follows. Involved in unsaturated fatty acids biosynthesis. Catalyzes the dehydration of short chain beta-hydroxyacyl-ACPs and long chain saturated and unsaturated beta-hydroxyacyl-ACPs. This Lactiplantibacillus plantarum (strain ATCC BAA-793 / NCIMB 8826 / WCFS1) (Lactobacillus plantarum) protein is 3-hydroxyacyl-[acyl-carrier-protein] dehydratase FabZ.